We begin with the raw amino-acid sequence, 354 residues long: Cellular communication network factor 6 (354 aa).

An N-terminal signal peptide occupies residues 1-23 (MRRLLFCTLLMTGLTQLCCRTQG). Positions 44–117 (RTEVCRWPCR…RYETGVCAYL (74 aa)) constitute an IGFBP N-terminal domain. 13 disulfide bridges follow: Cys-48/Cys-72, Cys-52/Cys-74, Cys-54/Cys-75, Cys-61/Cys-78, Cys-86/Cys-100, Cys-92/Cys-114, Cys-209/Cys-238, Cys-219/Cys-223, Cys-247/Cys-252, Cys-268/Cys-305, Cys-285/Cys-319, Cys-296/Cys-335, and Cys-299/Cys-337. A TSP type-1 domain is found at 208–253 (KCLVQATKWTPCSRTCGMGISNRVTNDNANCEMRKERRLCYIQPCS). The 75-residue stretch at 268-342 (CQPTFQLPKA…TSCVCQRDCR (75 aa)) folds into the CTCK domain. N-linked (GlcNAc...) asparagine glycosylation occurs at Asn-308.

The protein belongs to the CCN family.

It localises to the secreted. The protein resides in the mitochondrion. Its function is as follows. Plays a role in mitochondrial electron transport and mitochondrial respiration. The polypeptide is Cellular communication network factor 6 (Mus musculus (Mouse)).